Consider the following 496-residue polypeptide: tRNA modification GTPase mss1, mitochondrial (496 aa).

A mitochondrion-targeting transit peptide spans 1-19 (MRILNRVFLNTFQACFRRF). In terms of domain architecture, TrmE-type G spans 239–416 (GINVAILGPS…FLQALSSTFE (178 aa)). Residues 246–253 (GPSNAGKS), 293–297 (DTAGL), and 363–366 (NKVD) contribute to the GTP site.

The protein belongs to the TRAFAC class TrmE-Era-EngA-EngB-Septin-like GTPase superfamily. TrmE GTPase family.

The protein resides in the mitochondrion. GTPase involved in the 5-carboxymethylaminomethyl modification (mnm(5)s(2)U34) of the wobble uridine base in mitochondrial tRNAs. This Schizosaccharomyces pombe (strain 972 / ATCC 24843) (Fission yeast) protein is tRNA modification GTPase mss1, mitochondrial (mss1).